The sequence spans 251 residues: Aquaporin (251 aa).

The Cytoplasmic segment spans residues 1 to 11 (MAGETLRKIQS). A helical transmembrane segment spans residues 12-32 (LLGEMVASFIFGFAVYSAILG). Residues 33–42 (STIAQQPAAK) are Extracellular-facing. Residues 43–63 (VIIGLTVGFSAIGIIYSFSDV) form a helical membrane-spanning segment. At 64-86 (TIAHFNPAITLAAILTGKMGILC) the chain is on the cytoplasmic side. The NPA signature appears at 69-71 (NPA). A helical transmembrane segment spans residues 87-107 (GLGYMLAQCVGFILAVCALLV). Residues 108–133 (CSPVGYKETLNVIRPAPAPFGADNLN) lie on the Extracellular side of the membrane. Residues 134–154 (VFFTEFFLTAILVHIAFAVAV) form a helical membrane-spanning segment. Over 155-179 (NPYRPKVDTDGKFVDPDEKEPVDRR) the chain is Cytoplasmic. A helical membrane pass occupies residues 180-200 (ITAPLCIGLTLGFLAFMGLVT). Topologically, residues 201–224 (SGGAFNPGLTLAPVIMSNTWQHFW) are extracellular. The short motif at 206–208 (NPG) is the NPG element. Residues 225–245 (LYLGAQYLGGLVGGLLQVFVL) form a helical membrane-spanning segment. The Cytoplasmic portion of the chain corresponds to 246–251 (YKLSSN).

The protein belongs to the MIP/aquaporin (TC 1.A.8) family.

It localises to the cell membrane. In terms of biological role, water channel required to facilitate the transport of water across membranes. Involved in osmotolerance. This is Aquaporin (AQP) from Encephalitozoon hellem (Microsporidian parasite).